The following is an 84-amino-acid chain: Cell division topological specificity factor (84 aa).

It belongs to the MinE family.

Prevents the cell division inhibition by proteins MinC and MinD at internal division sites while permitting inhibition at polar sites. This ensures cell division at the proper site by restricting the formation of a division septum at the midpoint of the long axis of the cell. The protein is Cell division topological specificity factor of Cupriavidus necator (strain ATCC 17699 / DSM 428 / KCTC 22496 / NCIMB 10442 / H16 / Stanier 337) (Ralstonia eutropha).